A 130-amino-acid chain; its full sequence is Large ribosomal subunit protein bL12 (130 aa).

This sequence belongs to the bacterial ribosomal protein bL12 family. As to quaternary structure, homodimer. Part of the ribosomal stalk of the 50S ribosomal subunit. Forms a multimeric L10(L12)X complex, where L10 forms an elongated spine to which 2 to 4 L12 dimers bind in a sequential fashion. Binds GTP-bound translation factors.

Its function is as follows. Forms part of the ribosomal stalk which helps the ribosome interact with GTP-bound translation factors. Is thus essential for accurate translation. This is Large ribosomal subunit protein bL12 from Thermobifida fusca (strain YX).